A 933-amino-acid chain; its full sequence is Probable Rho-type GTPase-activating protein 4 (933 aa).

LIM zinc-binding domains are found at residues Cys-22–Asp-80 and Ile-81–Cys-129. Disordered stretches follow at residues Pro-181–Arg-200 and Glu-304–Thr-338. The span at Arg-325–Thr-338 shows a compositional bias: polar residues. Phosphoserine is present on Ser-353. 3 disordered regions span residues Arg-415–Ala-435, Ser-605–Glu-628, and Gly-641–Ser-660. Polar residues predominate over residues Arg-619–Glu-628. Ser-625 carries the phosphoserine modification. Residues Arg-643 to Ser-652 show a composition bias toward basic and acidic residues. Phosphoserine is present on residues Ser-738 and Ser-740. In terms of domain architecture, Rho-GAP spans Asn-753 to Phe-932.

Its function is as follows. GTPase-activating protein for Rho-type proteins. In Schizosaccharomyces pombe (strain 972 / ATCC 24843) (Fission yeast), this protein is Probable Rho-type GTPase-activating protein 4 (rga4).